Consider the following 93-residue polypeptide: Small ribosomal subunit protein mS33 (93 aa).

This sequence belongs to the mitochondrion-specific ribosomal protein mS33 family. In terms of assembly, component of the mitochondrial small ribosomal subunit (mt-SSU). Mature yeast 74S mitochondrial ribosomes consist of a small (37S) and a large (54S) subunit. The 37S small subunit contains a 15S ribosomal RNA (15S mt-rRNA) and at least 32 different proteins. The 54S large subunit contains a 21S rRNA (21S mt-rRNA) and at least 45 different proteins.

The protein localises to the mitochondrion. Component of the mitochondrial ribosome (mitoribosome), a dedicated translation machinery responsible for the synthesis of mitochondrial genome-encoded proteins, including at least some of the essential transmembrane subunits of the mitochondrial respiratory chain. The mitoribosomes are attached to the mitochondrial inner membrane and translation products are cotranslationally integrated into the membrane. This is Small ribosomal subunit protein mS33 (rsm27) from Schizosaccharomyces pombe (strain 972 / ATCC 24843) (Fission yeast).